The sequence spans 2726 residues: Filamin-C (2726 aa).

The actin-binding stretch occupies residues 1–260 (MMNNSNYSDA…VMTYLSQFPK (260 aa)). At S5 the chain carries Phosphoserine. Calponin-homology (CH) domains follow at residues 37–143 (KIQQ…LHYS) and 160–263 (QTPK…KAKL). 15 Filamin repeats span residues 271–369 (SKQL…EVNV), 371–469 (MALG…PVHV), 470–566 (AEAC…EVQV), 567–659 (SPEA…IAHI), 663–759 (PPDC…RVNV), 760–862 (GEGS…HIKV), 863–961 (DPSH…VVNV), 962–1057 (APPL…AVEG), 1058–1150 (VLPP…KATI), 1151–1245 (QPVF…RVHV), 1246–1345 (QPAV…RVGV), 1346–1438 (TEGC…RVPV), 1439–1534 (KDVV…KIKV), 1535–1631 (LPSH…RIHA), and 1636–1735 (DASK…HVLA). Omega-N-methylarginine is present on R1003. 2 positions are modified to phosphoserine: S1162 and S1339. The interval 1736-1759 (CDPLPHVEEPAEMLQMRQPYAPLR) is hinge 1. Filamin repeat units lie at residues 1760 to 1855 (PGTC…QFYV), 1856 to 1947 (DAIN…TAKI), 1948 to 2034 (TGDD…KILV), and 2037 to 2129 (SEIG…TVKV). S2043 is subject to Phosphoserine. The interval 2163-2244 (GNWFQMVSAQ…FGSITRQQEG (82 aa)) is intradomain insert; mediate targeting to Z lines. The span at 2193–2210 (EISKTRGGETKREVRVEE) shows a compositional bias: basic and acidic residues. Residues 2193–2214 (EISKTRGGETKREVRVEESTQV) are disordered. A Filamin 20; mediates interaction with XIRP1 repeat occupies 2212-2307 (TQVGGDPFPA…VPGSPFQFTV (96 aa)). Phosphoserine occurs at positions 2234 and 2237. A Phosphothreonine modification is found at T2239. Residues 2241–2260 (QQEGEASSQDMTAQVTSPSG) are compositionally biased toward polar residues. The tract at residues 2241-2261 (QQEGEASSQDMTAQVTSPSGK) is disordered. Filamin repeat units lie at residues 2310–2402 (LGEG…VVPV), 2404–2497 (SLSD…KIRV), and 2501–2593 (SQAG…KAKV). An interaction with INPPL1 region spans residues 2404 to 2725 (SLSDDARRLT…VPGSPFKVNV (322 aa)). A phosphoserine mark is found at S2587, S2618, S2621, S2633, S2715, and S2719. Residues 2594-2630 (TGPRLSGGHSLHETSTVLVETVTKSSSSRGASYSSIP) are hinge 2. Positions 2594 to 2726 (TGPRLSGGHS…PGSPFKVNVP (133 aa)) are self-association site, tail. The stretch at 2631–2725 (KFSSDASKVV…VPGSPFKVNV (95 aa)) is one Filamin 24 repeat.

It belongs to the filamin family. Homodimer; the filamin repeat 24 and the second hinge domain are important for dimer formation. Interacts with FLNB, INPPL1, ITGB1A, KCND2, MYOT, MYOZ1 and MYOZ3. Interacts with sarcoglycans SGCD and SGCG. Interacts (via filament repeats 17-18, 20-21 and 24) with USP25 (isoform USP25m only). Interacts with FBLIM1. Interacts with XIRP1; this interaction is mediated by filamin 20 repeat. Interacts with KY. Interacts with IGFN1. Interacts with MICALL2. Interacts with ANK3. Interacts with MICALL2. Interacts with ANK3. Interacts with SYNPO2. In terms of processing, ubiquitinated by FBXL22, leading to proteasomal degradation.

The protein resides in the cytoplasm. The protein localises to the membrane. Its subcellular location is the cytoskeleton. It is found in the myofibril. It localises to the sarcomere. The protein resides in the z line. Muscle-specific filamin, which plays a central role in sarcomere assembly and organization. Critical for normal myogenesis, it probably functions as a large actin-cross-linking protein with structural functions at the Z lines in muscle cells. May be involved in reorganizing the actin cytoskeleton in response to signaling events. The chain is Filamin-C (Flnc) from Mus musculus (Mouse).